The primary structure comprises 843 residues: Elongation factor 2 (843 aa).

In terms of domain architecture, tr-type G spans 17 to 344 (HNIRNMSVIA…MMIFHLPSPH (328 aa)). Residues 26 to 33 (AHVDHGKS) and 158 to 161 (NKMD) each bind GTP. Position 700 is a diphthamide (His700). Ser837 carries the phosphoserine modification.

It belongs to the TRAFAC class translation factor GTPase superfamily. Classic translation factor GTPase family. May interact with glutaredoxins (Grxs). In terms of tissue distribution, expressed in root, stem, leaves, flowers and siliques.

Its subcellular location is the cytoplasm. It carries out the reaction GTP + H2O = GDP + phosphate + H(+). It functions in the pathway protein biosynthesis; polypeptide chain elongation. In terms of biological role, catalyzes the GTP-dependent ribosomal translocation step during translation elongation. During this step, the ribosome changes from the pre-translocational (PRE) to the post-translocational (POST) state as the newly formed A-site-bound peptidyl-tRNA and P-site-bound deacylated tRNA move to the P and E sites, respectively. Catalyzes the coordinated movement of the two tRNA molecules, the mRNA and conformational changes in the ribosome. Involved in cold responses leading to freezing tolerance via the induction of cold-responsive genes. In Arabidopsis thaliana (Mouse-ear cress), this protein is Elongation factor 2.